A 302-amino-acid chain; its full sequence is Aspartate carbamoyltransferase catalytic subunit (302 aa).

The carbamoyl phosphate site is built by Arg-51 and Thr-52. Residue Lys-80 coordinates L-aspartate. Carbamoyl phosphate contacts are provided by Arg-101, His-129, and Gln-132. Residues Arg-162 and Arg-223 each coordinate L-aspartate. Leu-261 and Pro-262 together coordinate carbamoyl phosphate.

Belongs to the aspartate/ornithine carbamoyltransferase superfamily. ATCase family. Heterododecamer (2C3:3R2) of six catalytic PyrB chains organized as two trimers (C3), and six regulatory PyrI chains organized as three dimers (R2).

The catalysed reaction is carbamoyl phosphate + L-aspartate = N-carbamoyl-L-aspartate + phosphate + H(+). Its pathway is pyrimidine metabolism; UMP biosynthesis via de novo pathway; (S)-dihydroorotate from bicarbonate: step 2/3. In terms of biological role, catalyzes the condensation of carbamoyl phosphate and aspartate to form carbamoyl aspartate and inorganic phosphate, the committed step in the de novo pyrimidine nucleotide biosynthesis pathway. The protein is Aspartate carbamoyltransferase catalytic subunit of Chromobacterium violaceum (strain ATCC 12472 / DSM 30191 / JCM 1249 / CCUG 213 / NBRC 12614 / NCIMB 9131 / NCTC 9757 / MK).